We begin with the raw amino-acid sequence, 197 residues long: Protein SPMIP2 (197 aa).

The tract at residues 161–197 is disordered; the sequence is SKAALPIGSRPPKLPKLPKKEEKSKFRPLHQHDARCY. Residues 178–197 show a composition bias toward basic and acidic residues; it reads PKKEEKSKFRPLHQHDARCY.

The chain is Protein SPMIP2 (SPMIP2) from Bos taurus (Bovine).